The sequence spans 189 residues: UPF0301 protein RT0098 (189 aa).

The protein belongs to the UPF0301 (AlgH) family.

The sequence is that of UPF0301 protein RT0098 from Rickettsia typhi (strain ATCC VR-144 / Wilmington).